The sequence spans 426 residues: MSEIVDIHAREIIDSRGNPTVEAEVTLASGVMGRAAVPSGASTGAREAIELRDDDVRYGGKGVRKAVGHVNGEIREALLGMKATDLAAVDGRMIELDGTPNKSRLGANALLAVSMATAHANAADAGMPLYRHLGGEEAVTLPVPMMNIVNGGAHADNSVDMQEFMILPVGASSIAEAVRYGAEVFHALKKVLHKRGSSTAVGDEGGFAPDLPSNEAAIEVILEAIDKAGFKAGQDIWLGLDCASSEFHKDGKYVLASEGKSFDAAGFVDYLAGWVNQYPILTIEDGMAEDDWAGWKLLTEKLGGKVQLVGDDLFVTNTEILKEGIDKHIANSILIKLNQIGTVSETLAAIHMAHKAGYTAVISHRSGETEDVTIADLSVATQAGQIKTGSLSRSDRVAKYNQLIRIEEALGSAARYAGRGAFKQLG.

Gln-162 lines the (2R)-2-phosphoglycerate pocket. The active-site Proton donor is Glu-204. Asp-241, Glu-284, and Asp-311 together coordinate Mg(2+). (2R)-2-phosphoglycerate contacts are provided by Lys-336, Arg-365, Ser-366, and Lys-387. The active-site Proton acceptor is Lys-336.

It belongs to the enolase family. Component of the RNA degradosome, a multiprotein complex involved in RNA processing and mRNA degradation. Mg(2+) serves as cofactor.

The protein resides in the cytoplasm. Its subcellular location is the secreted. It is found in the cell surface. It carries out the reaction (2R)-2-phosphoglycerate = phosphoenolpyruvate + H2O. Its pathway is carbohydrate degradation; glycolysis; pyruvate from D-glyceraldehyde 3-phosphate: step 4/5. Functionally, catalyzes the reversible conversion of 2-phosphoglycerate (2-PG) into phosphoenolpyruvate (PEP). It is essential for the degradation of carbohydrates via glycolysis. This is Enolase from Thioalkalivibrio sulfidiphilus (strain HL-EbGR7).